The chain runs to 199 residues: Gamma-glutamylcyclotransferase 2-3 (199 aa).

Residue 5–10 coordinates substrate; the sequence is VFGYGS. E86 functions as the Proton acceptor in the catalytic mechanism.

This sequence belongs to the gamma-glutamylcyclotransferase family. Mn(2+) is required as a cofactor.

The protein resides in the cytoplasm. The enzyme catalyses glutathione = L-cysteinylglycine + 5-oxo-L-proline. Functionally, converts GSH to 5-oxoproline and cysteine-glycine (Cys-Gly) dipeptide in vitro and plays a significant role in glutathione (GSH) homeostasis. Has no activity towards gamma-glutamyl-L-cysteine but possesses very low activity towards gamma-glutamyl-L-alanine. The protein is Gamma-glutamylcyclotransferase 2-3 of Arabidopsis thaliana (Mouse-ear cress).